A 331-amino-acid chain; its full sequence is DNA-directed RNA polymerase subunit alpha (331 aa).

The interval 1 to 235 (MTMHIRWRGM…KHLNPFVQYR (235 aa)) is alpha N-terminal domain (alpha-NTD). The alpha C-terminal domain (alpha-CTD) stretch occupies residues 255 to 331 (QLEAKLNMTL…GMRVPNQPLF (77 aa)).

This sequence belongs to the RNA polymerase alpha chain family. As to quaternary structure, homodimer. The RNAP catalytic core consists of 2 alpha, 1 beta, 1 beta' and 1 omega subunit. When a sigma factor is associated with the core the holoenzyme is formed, which can initiate transcription.

It carries out the reaction RNA(n) + a ribonucleoside 5'-triphosphate = RNA(n+1) + diphosphate. Functionally, DNA-dependent RNA polymerase catalyzes the transcription of DNA into RNA using the four ribonucleoside triphosphates as substrates. This is DNA-directed RNA polymerase subunit alpha from Rhodopirellula baltica (strain DSM 10527 / NCIMB 13988 / SH1).